The following is an 85-amino-acid chain: U4-theraphotoxin-Hhn1ad (85 aa).

Positions 1–22 are cleaved as a signal peptide; sequence MKVTLIAILTCAAVLVLHTTAA. The propeptide occupies 23 to 48; the sequence is EELKTESQLMEVGMPDTELATVDEER. Disulfide bonds link cysteine 52–cysteine 66, cysteine 56–cysteine 77, and cysteine 71–cysteine 82.

The protein belongs to the neurotoxin 12 (Hwtx-2) family. 02 (Hwtx-2) subfamily. In terms of tissue distribution, expressed by the venom gland.

It localises to the secreted. Its function is as follows. Postsynaptic neurotoxin. The sequence is that of U4-theraphotoxin-Hhn1ad from Cyriopagopus hainanus (Chinese bird spider).